Reading from the N-terminus, the 153-residue chain is MFTESMLFLLLFLLLGLIAKNNSLIIAVAVVILLKLFHVDGKAMELIQAKGINWGVTIITVAILIPIATGQIGFKDLIDSFKSAAGWIGLGAGIAVSILAKKGVGYMAVDPQVTVSLVFGTILAVVLFRGIAAGPVIAAGIAYMAMQLVAFIK.

4 consecutive transmembrane segments (helical) span residues methionine 6–isoleucine 26, tryptophan 54–phenylalanine 74, serine 80–alanine 100, and leucine 117–isoleucine 137.

This sequence belongs to the UPF0756 family.

The protein localises to the cell membrane. This is UPF0756 membrane protein lin1603 from Listeria innocua serovar 6a (strain ATCC BAA-680 / CLIP 11262).